Reading from the N-terminus, the 154-residue chain is Large ribosomal subunit protein uL13 (154 aa).

This sequence belongs to the universal ribosomal protein uL13 family. As to quaternary structure, part of the 50S ribosomal subunit.

Functionally, this protein is one of the early assembly proteins of the 50S ribosomal subunit, although it is not seen to bind rRNA by itself. It is important during the early stages of 50S assembly. This chain is Large ribosomal subunit protein uL13, found in Bradyrhizobium sp. (strain BTAi1 / ATCC BAA-1182).